Consider the following 387-residue polypeptide: Patatin group D-3 (387 aa).

Positions 1–23 (MATTKSFLILIVMILATTSSTFA) are cleaved as a signal peptide. The 199-residue stretch at 32 to 230 (LSIDGGGIKG…TVADPALLSI (199 aa)) folds into the PNPLA domain. A GXGXXG motif is present at residues 36–41 (GGGIKG). The short motif at 75–79 (GTSTG) is the GXSXG element. The Nucleophile role is filled by Ser-77. N-linked (GlcNAc...) asparagine glycosylation is present at Asn-115. Asp-216 serves as the catalytic Proton acceptor. The DGA/G motif lies at 216–218 (DGA). Residues 361-385 (ETYEEALKRFAKLLSDRKKLRANKA) are a coiled coil.

The protein belongs to the patatin family. In terms of tissue distribution, tuber.

Its subcellular location is the vacuole. Its function is as follows. Probable lipolytic acyl hydrolase (LAH), an activity which is thought to be involved in the response of tubers to pathogens. In Solanum tuberosum (Potato), this protein is Patatin group D-3.